Here is a 357-residue protein sequence, read N- to C-terminus: UDP-N-acetylglucosamine--N-acetylmuramyl-(pentapeptide) pyrophosphoryl-undecaprenol N-acetylglucosamine transferase (357 aa).

Residues 11–13 (TGG), asparagine 120, arginine 161, serine 188, and glutamine 281 contribute to the UDP-N-acetyl-alpha-D-glucosamine site.

This sequence belongs to the glycosyltransferase 28 family. MurG subfamily.

It localises to the cell inner membrane. It carries out the reaction di-trans,octa-cis-undecaprenyl diphospho-N-acetyl-alpha-D-muramoyl-L-alanyl-D-glutamyl-meso-2,6-diaminopimeloyl-D-alanyl-D-alanine + UDP-N-acetyl-alpha-D-glucosamine = di-trans,octa-cis-undecaprenyl diphospho-[N-acetyl-alpha-D-glucosaminyl-(1-&gt;4)]-N-acetyl-alpha-D-muramoyl-L-alanyl-D-glutamyl-meso-2,6-diaminopimeloyl-D-alanyl-D-alanine + UDP + H(+). It participates in cell wall biogenesis; peptidoglycan biosynthesis. In terms of biological role, cell wall formation. Catalyzes the transfer of a GlcNAc subunit on undecaprenyl-pyrophosphoryl-MurNAc-pentapeptide (lipid intermediate I) to form undecaprenyl-pyrophosphoryl-MurNAc-(pentapeptide)GlcNAc (lipid intermediate II). This Prochlorococcus marinus (strain SARG / CCMP1375 / SS120) protein is UDP-N-acetylglucosamine--N-acetylmuramyl-(pentapeptide) pyrophosphoryl-undecaprenol N-acetylglucosamine transferase.